The following is a 753-amino-acid chain: MSVQKVRVERKIGDSVLSFETGHIAKQAAGSVLVQYGETVVLVAAASGTPRPGIDFFPLMCDYRERLAAAGKFPGGFLKREGRPSTKEILSSRLMDRPIRPLWPAGYKDEVQVQACVIASDLQNDGDVLAMIGGATALHISPLPFKGPLGSVRVGKVDGKLVAFPTADQLEQSELDMIVSGSRDMVAMIEGFANEMPEDEMMEAIGFAHDAIREVIDLQEEFYKKVNPEKTPYQSPEDDGLLQRLTDAYYSDFKTAQQTSGKQARAEAVRAVRDRAMADVIPDPNAADAVCVNRFKSVWHDLEEKVVRDLILAGTRPDGRDHNSLRAIHCETDLLPRVHGSALFQRGETQALITIALGTSRDEQRVDGLQDEYSKKFMLDYNFPSYSVGECRPIRGPGRREIGHGCLAERSVAPVLPSADDFPYTIRVISDITESNGSSSMASVCGATLGLMASGVPISNPVAGISVGLVQDGPDNWCLITDILGTEDHFGDMDFKIAGTQNGITGIQLDLKVTGVTNDIIRATLKQSREARIEILKKMLTTIPRPRREISPTAPRLLRTKISPDKIGALIGPGGKNIRGIQETTGAVIEVDDEGTVLVASSNKESAQEAMRQVEACTATVQIGKIYDGTVSSIKEFGAFVEILPGRDGLVHISEMSGGYISSLDQVIAVGDAMKVLVIDVDEHDRVKLSRRKALEELGEEDPLAVEGEGGGDSEGGGDGEDRPRRRRGGSGGGGGGGRGRGPRRSGGGRDRD.

Mg(2+) is bound by residues Asp488 and Asp494. The 60-residue stretch at 555 to 614 folds into the KH domain; sequence PRLLRTKISPDKIGALIGPGGKNIRGIQETTGAVIEVDDEGTVLVASSNKESAQEAMRQV. In terms of domain architecture, S1 motif spans 624-692; sequence GKIYDGTVSS…EHDRVKLSRR (69 aa). Acidic residues predominate over residues 698–719; that stretch reads LGEEDPLAVEGEGGGDSEGGGD. The disordered stretch occupies residues 698–753; sequence LGEEDPLAVEGEGGGDSEGGGDGEDRPRRRRGGSGGGGGGGRGRGPRRSGGGRDRD. Residues 730–740 are compositionally biased toward gly residues; that stretch reads GSGGGGGGGRG.

This sequence belongs to the polyribonucleotide nucleotidyltransferase family. It depends on Mg(2+) as a cofactor.

The protein resides in the cytoplasm. It carries out the reaction RNA(n+1) + phosphate = RNA(n) + a ribonucleoside 5'-diphosphate. In terms of biological role, involved in mRNA degradation. Catalyzes the phosphorolysis of single-stranded polyribonucleotides processively in the 3'- to 5'-direction. This chain is Polyribonucleotide nucleotidyltransferase, found in Rhodopirellula baltica (strain DSM 10527 / NCIMB 13988 / SH1).